The chain runs to 262 residues: Putative BTB/POZ domain-containing protein L834 (262 aa).

The region spanning 16-86 is the BTB domain; that stretch reads FDVVVELTDE…FYKKNIQPCI (71 aa).

This sequence belongs to the mimivirus BTB/WD family.

The chain is Putative BTB/POZ domain-containing protein L834 from Acanthamoeba polyphaga (Amoeba).